A 1385-amino-acid chain; its full sequence is MEDYFTGSFFDKPKDPLHFSAIRISISSPEKIRERSFGEVKKPETINYRTFKPERDGLFCAKIFGPTKDYECNCGKYKRMKHRGIICEKCGVEVIPSKVRRERLGHIDLATPVAHIWFLKSLPSRIGNLLDITLKDLERVLYFEAFAITDPGTTPLKFCEVLSEDKFLKAQEEYGIDAFEGGMGAEAVRKCLQALELDELAVQLRMEMMESTSEAKRKKVAKRLKVVEAFKQSGNKPEWMILECIPVLPPELRPLVPLDGGRFATSDLNDLYRRVINRNNRLKRLCELQAPEVIIRNEKRMLQEAVDALFDNGRRGRAIAGPNKRPLKSLSDMLKGKSGRFRQNLLGKRVDYSGRSVIVVGPELKLHQCGLPKKMALELFKPFIYNKLEERGYVTTIKSAKKMVEKERPEVWDVLEEVIREHPVMLNRAPTLHRLGIQAFEPVLIEGKAIQLHPLVCTAFNADFDGDQMAVHLPLSIESQVETRVLMMSTNNILSPAHGKPIIVPSQDMVLGTYYMTRERIGAKGERTTFASPEEVRIAFDHGEVDMQARVKVRMIDAPDNPDEKPQLVDTTVGRIILREVLPPQVPFSAINKVMNKKELSNLIDTCYRLAGNKETVILADRLKETGFRYANLAGISICIDDMVIPEGKQAIIDRANEEVQEIQNQYTEGLITDGERYNKVIDIWAKSTEEIAKEMLGNLSKEIVVDSDGKEVEIPSFNAIHMMADSGARGSAQQIRQLAGMRGLMAKPSGEIIETPITANFREGLTVLQYFISTHGARKGLADTALKTANSGYLTRRLVDVAQDAIITEDDCGTLDGLTVSSLTEGGEVIEHIGDRILGRVALDDIHDPITDEILVEANQEIDENLVKKIEDAGLEKVKMRSVLTCQSKRGICAKCYGRDLARGHIVNMGEAVGVIAAQSIGEPGTQLTMRTFHIGGTASRAAEQTSLEARYEGLVKYINLHTVVNAEGFHIVMSRNGEVAVVDETGRERERYGVVYGAKLKIAPEGSVKAGETLAEWDPYTMPILTEVGGRVKFGDIIEGVTMEEKLDDVTGLSRKEIVETKDSDKRPRIAIKDAGESGGTIGRYYLPVGAIINVTEDAVICGGDIIAKIPRETTKTKDITGGLPRVAELFEARKPKDFAVITEIDGKVNFGKDSKGKRKVVVTPELGEPKEYLIPKGKHISVHEGDYVRAGEPLMDGSSNPHDILRVLGVKELAKYLVDEVQEVYRLQGVKINDKHIEVIVRQMLRRVRIKEVGDTNLLIDDQVERYVFEEENAKAFAEGKRPATAEPLLLGITKASLSTESFISAASFQETTKVLTQAAIEGKVDALRGLKENVIMGRLIPAGTGIPRYRHLRLHVEEQTGEQAVTQLDAAPDLDAEQQAA.

C72, C74, C87, and C90 together coordinate Zn(2+). 3 residues coordinate Mg(2+): D463, D465, and D467. Zn(2+) contacts are provided by C813, C887, C894, and C897.

This sequence belongs to the RNA polymerase beta' chain family. The RNAP catalytic core consists of 2 alpha, 1 beta, 1 beta' and 1 omega subunit. When a sigma factor is associated with the core the holoenzyme is formed, which can initiate transcription. Requires Mg(2+) as cofactor. Zn(2+) is required as a cofactor.

The catalysed reaction is RNA(n) + a ribonucleoside 5'-triphosphate = RNA(n+1) + diphosphate. In terms of biological role, DNA-dependent RNA polymerase catalyzes the transcription of DNA into RNA using the four ribonucleoside triphosphates as substrates. The protein is DNA-directed RNA polymerase subunit beta' of Trichlorobacter lovleyi (strain ATCC BAA-1151 / DSM 17278 / SZ) (Geobacter lovleyi).